The sequence spans 283 residues: Tropomyosin (283 aa).

The stretch at 1 to 283 (MDAIKKKMQA…LDSAFVELIL (283 aa)) forms a coiled coil.

This sequence belongs to the tropomyosin family. In terms of assembly, homodimer.

Functionally, tropomyosin, in association with the troponin complex, plays a central role in the calcium dependent regulation of muscle contraction. This Locusta migratoria (Migratory locust) protein is Tropomyosin.